A 465-amino-acid chain; its full sequence is Protein hedgehog (465 aa).

The N-palmitoyl cysteine moiety is linked to residue Cys-79. Residues Glu-143, Glu-144, Asp-149, Thr-179, Glu-180, Asp-183, and Asp-185 each contribute to the Ca(2+) site. Gly-251 carries the Cholesterol glycine ester lipid modification.

Belongs to the hedgehog family. In terms of assembly, interacts with shf. Post-translationally, the C-terminal part of the hedgehog protein precursor displays an autoproteolysis activity that results in the cleavage of the full-length protein into two parts (N-product and C-product). In addition, the C-terminal part displays a cholesterol transferase activity that results by the covalent attachment of a cholesterol moiety to the C-terminal of the newly generated N-product. The N-product is the active species in both local and long-range signaling, whereas the C-product has no signaling activity. Cholesterylation is required for N-product targeting to lipid rafts and multimerization. In terms of processing, N-palmitoylation by Rasp of the hedgehog N-product, within the secretory pathway, is required for the embryonic and larval patterning activities of the hedgehog signal.

It is found in the nucleus. The protein resides in the cytoplasm. It localises to the cell membrane. The enzyme catalyses glycyl-L-cysteinyl-[protein] + cholesterol + H(+) = [protein]-C-terminal glycyl cholesterol ester + N-terminal L-cysteinyl-[protein]. The C-terminal part of the hedgehog protein precursor displays an autoproteolysis activity that results in the cleavage of the full-length protein into two parts (N-product and C-product). In addition, the C-terminal part displays a cholesterol transferase activity that results by the covalent attachment of a cholesterol moiety to the C-terminal of the newly generated N-product. Once cleaved, the C-product has no signaling activity and diffuses from the cell. In terms of biological role, the dually lipidated hedgehog protein N-product is a morphogen which is essential for a variety of patterning events during development. Establishes the anterior-posterior axis of the embryonic segments and patterns the larval imaginal disks. Binds to the patched (ptc) receptor, which functions in association with smoothened (smo), to activate the transcription of target genes wingless (wg), decapentaplegic (dpp) and ptc. In the absence of hh, ptc represses the constitutive signaling activity of smo through fused (fu). Essential component of a signaling pathway which regulates the Duox-dependent gut immune response to bacterial uracil; required to activate Cad99C-dependent endosome formation, norpA-dependent Ca2+ mobilization and p38 MAPK, which are essential steps in the Duox-dependent production of reactive oxygen species (ROS) in response to intestinal bacterial infection. During photoreceptor differentiation, it up-regulates transcription of Ubr3, which in turn promotes the hh-signaling pathway by mediating the ubiquitination and degradation of cos. In Drosophila sechellia (Fruit fly), this protein is Protein hedgehog.